A 267-amino-acid chain; its full sequence is NAD kinase 2 (267 aa).

Catalysis depends on D50, which acts as the Proton acceptor. NAD(+) is bound by residues 50–51 (DG), K55, 122–123 (NE), R149, D151, 162–167 (TAYNKS), and A186.

The protein belongs to the NAD kinase family. The cofactor is a divalent metal cation.

It is found in the cytoplasm. The catalysed reaction is NAD(+) + ATP = ADP + NADP(+) + H(+). Functionally, involved in the regulation of the intracellular balance of NAD and NADP, and is a key enzyme in the biosynthesis of NADP. Catalyzes specifically the phosphorylation on 2'-hydroxyl of the adenosine moiety of NAD to yield NADP. This Listeria monocytogenes serovar 1/2a (strain ATCC BAA-679 / EGD-e) protein is NAD kinase 2.